The primary structure comprises 366 residues: Putative ankyrin repeat protein RBE_0601 (366 aa).

ANK repeat units lie at residues lysine 39 to glutamate 68, leucine 94 to threonine 124, histidine 131 to glutamine 160, valine 162 to aspartate 186, lysine 210 to alanine 239, and isoleucine 250 to lysine 280.

The protein is Putative ankyrin repeat protein RBE_0601 of Rickettsia bellii (strain RML369-C).